The following is a 210-amino-acid chain: Uridine kinase (210 aa).

12–19 (GGSGGGKT) provides a ligand contact to ATP.

This sequence belongs to the uridine kinase family.

It localises to the cytoplasm. It catalyses the reaction uridine + ATP = UMP + ADP + H(+). It carries out the reaction cytidine + ATP = CMP + ADP + H(+). It participates in pyrimidine metabolism; CTP biosynthesis via salvage pathway; CTP from cytidine: step 1/3. Its pathway is pyrimidine metabolism; UMP biosynthesis via salvage pathway; UMP from uridine: step 1/1. This Streptococcus uberis (strain ATCC BAA-854 / 0140J) protein is Uridine kinase.